A 76-amino-acid chain; its full sequence is Small ribosomal subunit protein bS16 (76 aa).

The protein belongs to the bacterial ribosomal protein bS16 family.

The chain is Small ribosomal subunit protein bS16 from Helicobacter acinonychis (strain Sheeba).